Here is a 473-residue protein sequence, read N- to C-terminus: Zinc finger and SCAN domain-containing protein 21 (473 aa).

Residue Lys27 forms a Glycyl lysine isopeptide (Lys-Gly) (interchain with G-Cter in SUMO2) linkage. Positions Arg45–Leu127 constitute an SCAN box domain. Positions Leu127 to Asn171 are disordered. Residues Ile148–Asn171 are compositionally biased toward polar residues. Glycyl lysine isopeptide (Lys-Gly) (interchain with G-Cter in SUMO2) cross-links involve residues Lys221 and Lys232. Residues Leu244–Pro272 are disordered. The span at Gly258–Pro272 shows a compositional bias: basic and acidic residues. 7 C2H2-type zinc fingers span residues Tyr277–His299, Tyr305–His327, Tyr333–His354, Tyr360–His382, Tyr388–His410, Tyr416–His438, and Tyr444–His466. Lys349 is covalently cross-linked (Glycyl lysine isopeptide (Lys-Gly) (interchain with G-Cter in SUMO2)).

It belongs to the krueppel C2H2-type zinc-finger protein family.

The protein resides in the nucleus. In terms of biological role, strong transcriptional activator. Plays an important role in spermatogenesis; essential for the progression of meiotic prophase I in spermatocytes. This is Zinc finger and SCAN domain-containing protein 21 (ZSCAN21) from Gorilla gorilla gorilla (Western lowland gorilla).